A 326-amino-acid polypeptide reads, in one-letter code: Ribosomal large subunit pseudouridine synthase D (326 aa).

In terms of domain architecture, S4 RNA-binding spans 18–91 (QRLDQALAEM…IPLDIVYEDE (74 aa)). D139 is a catalytic residue.

This sequence belongs to the pseudouridine synthase RluA family. In terms of assembly, in late stage pre-50S ribosomal subunit interacts with ObgE and DarP(YjgA).

It is found in the cytoplasm. The catalysed reaction is uridine(1911/1915/1917) in 23S rRNA = pseudouridine(1911/1915/1917) in 23S rRNA. Responsible for synthesis of pseudouridine from uracil at positions 1911, 1915 and 1917 in 23S ribosomal RNA. Other positions are not modified. Uridine isomerization occurs as a late step during the assembly of the large ribosomal subunit. Member of a network of 50S ribosomal subunit biogenesis factors (ObgE, RluD, RsfS and DarP(YjgA)) which assembles along the 30S-50S interface, allowing 23S rRNA modification and preventing incorrect 23S rRNA structures from forming. The chain is Ribosomal large subunit pseudouridine synthase D from Escherichia coli (strain K12).